The chain runs to 498 residues: MSQFILAIDQGTTSSRAILFNHEGQIHGVAQQEYPQIFPEPGWVEHDANAIWNSQLAVARQVLKENKLSATDIAAIGITNQRETTVIWDRKTGQPIANAIVWQDRRTAAYCDQLRAEGKADLFQQKTGLVLDSYFSGTKVKWLLDHIPDARARAERGELAFGTIDSWLVYKLSGAHLTDSSNASRTLLFNIHTLQWDEELLAIFDIPASLLPAVVASSGIASHTHTELFGAPIAIAGIAGDQQAATFGQACHKPGMAKNTYGTGCFMLLNTGTHAISSHNNLLTTIGWTLGIGKAAQTNYMLEGGVFMGGAIVQWLRDGLGIIQRSADVEALATSVPDNGGVVFVPAFSGLGAPYWDSYARGTILGMTRGSNKAHIARAALESIAYQSVDLLDAMQKDAQSSSQELRVDGGASRNDLLMQFQADILNVPVIRPVVTETTALGAAYLAGLAVSFWQSAEEITAQWKMDKRFEPAMSADEREQRLHTWHRAVERAQAWES.

Thr-12 serves as a coordination point for ADP. The ATP site is built by Thr-12, Thr-13, and Ser-14. Thr-12 serves as a coordination point for sn-glycerol 3-phosphate. Arg-16 contacts ADP. Sn-glycerol 3-phosphate is bound by residues Arg-82, Glu-83, Tyr-134, and Asp-241. Arg-82, Glu-83, Tyr-134, Asp-241, and Gln-242 together coordinate glycerol. Residues Thr-263 and Gly-310 each contribute to the ADP site. The ATP site is built by Thr-263, Gly-310, Gln-314, and Gly-411. The ADP site is built by Gly-411 and Asn-415.

It belongs to the FGGY kinase family.

The enzyme catalyses glycerol + ATP = sn-glycerol 3-phosphate + ADP + H(+). It functions in the pathway polyol metabolism; glycerol degradation via glycerol kinase pathway; sn-glycerol 3-phosphate from glycerol: step 1/1. Inhibited by fructose 1,6-bisphosphate (FBP). In terms of biological role, key enzyme in the regulation of glycerol uptake and metabolism. Catalyzes the phosphorylation of glycerol to yield sn-glycerol 3-phosphate. This chain is Glycerol kinase, found in Janthinobacterium sp. (strain Marseille) (Minibacterium massiliensis).